Reading from the N-terminus, the 550-residue chain is Pectinesterase 2.1 (550 aa).

Asn179 carries N-linked (GlcNAc...) asparagine glycosylation. Residues Thr312 and Gln342 each coordinate substrate. An intrachain disulfide couples Cys331 to Cys358. The active-site Proton donor is Asp365. Asp386 acts as the Nucleophile in catalysis. Cys399 and Cys433 are oxidised to a cystine. The substrate site is built by Arg454 and Trp456.

This sequence in the N-terminal section; belongs to the PMEI family. In the C-terminal section; belongs to the pectinesterase family.

It is found in the secreted. The protein localises to the cell wall. The enzyme catalyses [(1-&gt;4)-alpha-D-galacturonosyl methyl ester](n) + n H2O = [(1-&gt;4)-alpha-D-galacturonosyl](n) + n methanol + n H(+). It participates in glycan metabolism; pectin degradation; 2-dehydro-3-deoxy-D-gluconate from pectin: step 1/5. Pectinesterase may play a role in cell wall metabolism during fruit growth and development prior to ripening and may be required for preparing cell walls for softening by polygalacturonase during fruit ripening. In Solanum lycopersicum (Tomato), this protein is Pectinesterase 2.1 (PME2.1).